A 353-amino-acid polypeptide reads, in one-letter code: Guanine nucleotide-binding protein G(q) subunit alpha (353 aa).

2 S-palmitoyl cysteine lipidation sites follow: Cys-3 and Cys-4. Residues 32 to 353 (RELKLLLLGT…QLNLKEYNLV (322 aa)) form the G-alpha domain. The G1 motif stretch occupies residues 35-48 (KLLLLGTGESGKST). GTP-binding positions include 40-47 (GTGESGKS), 174-180 (LRVRVPT), 199-203 (DVGGQ), 268-271 (NKKD), and Ala-325. Ser-47 and Thr-180 together coordinate Mg(2+). The tract at residues 172 to 180 (DILRVRVPT) is G2 motif. Residues 195–204 (FRMVDVGGQR) form a G3 motif region. A G4 motif region spans residues 264-271 (ILFLNKKD). Positions 323-328 (TCATDT) are G5 motif.

It belongs to the G-alpha family. G(q) subfamily. G proteins are composed of 3 units; alpha, beta and gamma. The alpha chain contains the guanine nucleotide binding site.

Functionally, guanine nucleotide-binding proteins (G proteins) are involved as modulators or transducers in various transmembrane signaling systems. This is Guanine nucleotide-binding protein G(q) subunit alpha from Lymnaea stagnalis (Great pond snail).